Reading from the N-terminus, the 282-residue chain is MQIVNISAYKFVTLNDRETLRPALLAECQARDLKGTVLLAPEGINIFLAGSREAIDGIVGWLRADARFADLAPKESLSDHQPFRRLLVRLKKEIITMRYPLIRPEDGRAPSLPPATLKRWLDQGHDDDGREVVMLDTRNGFEVAVGTFRDAVEYGIRKFTEFPPAIAAHKDDFAGKTVVSFCTGGIRCEKAAIHMQEIGLQHVYQLEGGILKYFEEVGADHYDGDCFVFDHRTALNAELLPAGPKQCFACRAVVTPEEQQSADYIPGQRCPHCADHQARAAT.

Residues 128–222 (DGREVVMLDT…YFEEVGADHY (95 aa)) form the Rhodanese domain. The active-site Cysteine persulfide intermediate is C182.

Belongs to the TrhO family.

The catalysed reaction is uridine(34) in tRNA + AH2 + O2 = 5-hydroxyuridine(34) in tRNA + A + H2O. In terms of biological role, catalyzes oxygen-dependent 5-hydroxyuridine (ho5U) modification at position 34 in tRNAs. The chain is tRNA uridine(34) hydroxylase from Ralstonia nicotianae (strain ATCC BAA-1114 / GMI1000) (Ralstonia solanacearum).